We begin with the raw amino-acid sequence, 77 residues long: MKLMIFTGLVLFAIVSLIEAQAENEKPCLPEYKVCTHAPGNCCSDLVCDRYGRYKSGAQIGRNCFCLQKGVIYKREN.

Positions 1–20 are cleaved as a signal peptide; it reads MKLMIFTGLVLFAIVSLIEA. Positions 21–26 are excised as a propeptide; that stretch reads QAENEK.

This sequence belongs to the neurotoxin 19 (CSTX) family. 08 (U8-Lctx) subfamily. In terms of processing, contains 4 disulfide bonds. Expressed by the venom gland.

Its subcellular location is the secreted. This is U8-lycotoxin-Ls1n from Lycosa singoriensis (Wolf spider).